Here is a 485-residue protein sequence, read N- to C-terminus: Zinc finger protein 165 (485 aa).

Lys23 participates in a covalent cross-link: Glycyl lysine isopeptide (Lys-Gly) (interchain with G-Cter in SUMO2). One can recognise an SCAN box domain in the interval 62 to 127; it reads GPREALSRLR…EEAVTILEDL (66 aa). Residues Lys162 and Lys195 each participate in a glycyl lysine isopeptide (Lys-Gly) (interchain with G-Cter in SUMO2) cross-link. Residues 290 to 314 form a C2H2-type 1; degenerate zinc finger; that stretch reads KSCKHGTCDQSFKWNSDFINHQIIY. C2H2-type zinc fingers lie at residues 344–366, 372–394, 400–422, 428–450, and 456–478; these read HQCNECGKAFRHSSKLARHQRIH, YECNECGKSFAESSDLTRHRRIH, FGCKECGRAFNLNSHLIRHQRIH, YECSECGKTFRVSSHLIRHFRIH, and YECSECGRAFSQSSNLSQHQRIH.

The protein belongs to the krueppel C2H2-type zinc-finger protein family. As to expression, expressed specifically in testis.

The protein localises to the nucleus. Functionally, may be involved in transcriptional regulation. In Homo sapiens (Human), this protein is Zinc finger protein 165 (ZNF165).